The primary structure comprises 272 residues: Acetylglutamate kinase (272 aa).

Substrate is bound by residues 41–42 (GG), arginine 63, and asparagine 166.

The protein belongs to the acetylglutamate kinase family. ArgB subfamily.

Its subcellular location is the cytoplasm. It catalyses the reaction N-acetyl-L-glutamate + ATP = N-acetyl-L-glutamyl 5-phosphate + ADP. Its pathway is amino-acid biosynthesis; L-arginine biosynthesis; N(2)-acetyl-L-ornithine from L-glutamate: step 2/4. Functionally, catalyzes the ATP-dependent phosphorylation of N-acetyl-L-glutamate. The protein is Acetylglutamate kinase of Anaeromyxobacter dehalogenans (strain 2CP-1 / ATCC BAA-258).